The following is a 294-amino-acid chain: Glycine--tRNA ligase alpha subunit (294 aa).

Belongs to the class-II aminoacyl-tRNA synthetase family. Tetramer of two alpha and two beta subunits.

It is found in the cytoplasm. The enzyme catalyses tRNA(Gly) + glycine + ATP = glycyl-tRNA(Gly) + AMP + diphosphate. This is Glycine--tRNA ligase alpha subunit from Sulfurovum sp. (strain NBC37-1).